The primary structure comprises 399 residues: Enolase (399 aa).

Residue Q149 coordinates (2R)-2-phosphoglycerate. E191 (proton donor) is an active-site residue. Positions 227, 268, and 293 each coordinate Mg(2+). Positions 318, 347, 348, and 369 each coordinate (2R)-2-phosphoglycerate. K318 functions as the Proton acceptor in the catalytic mechanism.

This sequence belongs to the enolase family. Requires Mg(2+) as cofactor.

The protein resides in the cytoplasm. It localises to the secreted. It is found in the cell surface. The catalysed reaction is (2R)-2-phosphoglycerate = phosphoenolpyruvate + H2O. The protein operates within carbohydrate degradation; glycolysis; pyruvate from D-glyceraldehyde 3-phosphate: step 4/5. Functionally, catalyzes the reversible conversion of 2-phosphoglycerate (2-PG) into phosphoenolpyruvate (PEP). It is essential for the degradation of carbohydrates via glycolysis. The sequence is that of Enolase from Archaeoglobus fulgidus (strain ATCC 49558 / DSM 4304 / JCM 9628 / NBRC 100126 / VC-16).